Here is a 237-residue protein sequence, read N- to C-terminus: Dihydroceramide fatty acyl 2-hydroxylase FAH2 (237 aa).

A run of 2 helical transmembrane segments spans residues 54–74 (VWWA…SISA) and 77–97 (GLTF…WTLL). Residues H102, H107, H123, H126, and H127 each coordinate Zn(2+). Helical transmembrane passes span 134–154 (LRLV…WKLL) and 156–176 (LLAT…GYVM). Residues H181, H185, H201, H204, and H205 each coordinate Zn(2+).

The protein belongs to the sterol desaturase family. Interacts with CYTB5-A, CYTB5-B, CYTB5-C and CYTB5-D. Zn(2+) serves as cofactor. Expressed in leaves, roots, flowers and seeds.

It is found in the endoplasmic reticulum membrane. It catalyses the reaction an N-(1,2-saturated acyl)sphinganine + 2 Fe(II)-[cytochrome b5] + O2 + 2 H(+) = an N-[(2'R)-hydroxyacyl]sphinganine + 2 Fe(III)-[cytochrome b5] + H2O. In terms of biological role, fatty acid 2-hydroxylase involved in the alpha-hydroxylation of the long-chain fatty acid (LCFA) palmitic acid. Probably involved in the resistance response to oxidative stress. The sequence is that of Dihydroceramide fatty acyl 2-hydroxylase FAH2 from Arabidopsis thaliana (Mouse-ear cress).